The following is a 332-amino-acid chain: UPF0194 membrane protein YbhG (332 aa).

The signal sequence occupies residues 1–16 (MMKKTVVIGLAVVVLA). Residues 108 to 209 (EEIAQAAAAV…LNLQDSTLIA (102 aa)) are a coiled coil.

The protein belongs to the UPF0194 family.

It localises to the periplasm. The chain is UPF0194 membrane protein YbhG from Shigella dysenteriae serotype 1 (strain Sd197).